The following is an 812-amino-acid chain: Probable phosphoketolase (812 aa).

This sequence belongs to the XFP family. Thiamine diphosphate serves as cofactor.

The protein is Probable phosphoketolase of Thermosynechococcus vestitus (strain NIES-2133 / IAM M-273 / BP-1).